Reading from the N-terminus, the 125-residue chain is MPTINQLVRQGREVEVTKSKSPAMQNCPQRRGVCTRVYTTTPKKPNSALRKVAKVRLTNGFEVISYIGGEGHNLQEHSVVLVRGGRVKDLPGVRYHIVRGSLDLQGVKDRKQSRSKYGSKRPKKA.

At Asp89 the chain carries 3-methylthioaspartic acid. The segment at 104-125 (LQGVKDRKQSRSKYGSKRPKKA) is disordered. A compositionally biased stretch (basic residues) spans 113–125 (SRSKYGSKRPKKA).

Belongs to the universal ribosomal protein uS12 family. Part of the 30S ribosomal subunit. Contacts proteins S8 and S17. May interact with IF1 in the 30S initiation complex.

Functionally, with S4 and S5 plays an important role in translational accuracy. Interacts with and stabilizes bases of the 16S rRNA that are involved in tRNA selection in the A site and with the mRNA backbone. Located at the interface of the 30S and 50S subunits, it traverses the body of the 30S subunit contacting proteins on the other side and probably holding the rRNA structure together. The combined cluster of proteins S8, S12 and S17 appears to hold together the shoulder and platform of the 30S subunit. In Leptothrix cholodnii (strain ATCC 51168 / LMG 8142 / SP-6) (Leptothrix discophora (strain SP-6)), this protein is Small ribosomal subunit protein uS12.